Here is a 220-residue protein sequence, read N- to C-terminus: ATP phosphoribosyltransferase (220 aa).

The protein belongs to the ATP phosphoribosyltransferase family. Short subfamily. Heteromultimer composed of HisG and HisZ subunits.

It is found in the cytoplasm. The catalysed reaction is 1-(5-phospho-beta-D-ribosyl)-ATP + diphosphate = 5-phospho-alpha-D-ribose 1-diphosphate + ATP. The protein operates within amino-acid biosynthesis; L-histidine biosynthesis; L-histidine from 5-phospho-alpha-D-ribose 1-diphosphate: step 1/9. Functionally, catalyzes the condensation of ATP and 5-phosphoribose 1-diphosphate to form N'-(5'-phosphoribosyl)-ATP (PR-ATP). Has a crucial role in the pathway because the rate of histidine biosynthesis seems to be controlled primarily by regulation of HisG enzymatic activity. This chain is ATP phosphoribosyltransferase, found in Prochlorococcus marinus (strain NATL1A).